Here is a 201-residue protein sequence, read N- to C-terminus: uncharacterized protein (201 aa).

The next 4 membrane-spanning stretches (helical) occupy residues 9-29 (YNVF…ILVA), 42-62 (FLFV…FFDV), 86-106 (SGVI…VVMV), and 126-146 (LPYL…SIGM). Basic and acidic residues-rich tracts occupy residues 165-174 (EPTDPNKTDN) and 182-191 (DENKKNEKEQ). A disordered region spans residues 165-201 (EPTDPNKTDNRAVVINLDENKKNEKEQSPPSAEMTSL). Residues 192–201 (SPPSAEMTSL) are compositionally biased toward polar residues.

It localises to the cell membrane. This is an uncharacterized protein from Mycoplasma genitalium (strain ATCC 33530 / DSM 19775 / NCTC 10195 / G37) (Mycoplasmoides genitalium).